The chain runs to 596 residues: Potassium-transporting ATPase potassium-binding subunit (596 aa).

The next 10 helical transmembrane spans lie at 6–26 (ILTI…LGGF), 67–87 (AIGL…LQLF), 136–156 (GLTT…IALI), 177–197 (ITLY…VGQG), 283–303 (LSNF…CFTF), 314–334 (WVVL…AVHF), 413–433 (GLYG…LMIG), 450–470 (MVAI…AIAV), 518–538 (MLAI…LALA), and 560–580 (LFIV…YVPA).

Belongs to the KdpA family. In terms of assembly, the system is composed of three essential subunits: KdpA, KdpB and KdpC.

It localises to the cell inner membrane. Part of the high-affinity ATP-driven potassium transport (or Kdp) system, which catalyzes the hydrolysis of ATP coupled with the electrogenic transport of potassium into the cytoplasm. This subunit binds the periplasmic potassium ions and delivers the ions to the membrane domain of KdpB through an intramembrane tunnel. This chain is Potassium-transporting ATPase potassium-binding subunit, found in Polynucleobacter asymbioticus (strain DSM 18221 / CIP 109841 / QLW-P1DMWA-1) (Polynucleobacter necessarius subsp. asymbioticus).